The primary structure comprises 208 residues: Methylthioribulose-1-phosphate dehydratase (208 aa).

The Zn(2+) site is built by H98 and H100.

The protein belongs to the aldolase class II family. MtnB subfamily. The cofactor is Zn(2+).

It catalyses the reaction 5-(methylsulfanyl)-D-ribulose 1-phosphate = 5-methylsulfanyl-2,3-dioxopentyl phosphate + H2O. It functions in the pathway amino-acid biosynthesis; L-methionine biosynthesis via salvage pathway; L-methionine from S-methyl-5-thio-alpha-D-ribose 1-phosphate: step 2/6. Catalyzes the dehydration of methylthioribulose-1-phosphate (MTRu-1-P) into 2,3-diketo-5-methylthiopentyl-1-phosphate (DK-MTP-1-P). The protein is Methylthioribulose-1-phosphate dehydratase of Hahella chejuensis (strain KCTC 2396).